A 399-amino-acid polypeptide reads, in one-letter code: MEKHLIALSVAALQAGAAPASADIKMGSLYPFSGPLALLGDESARGLEIAVEEINAKGGVQGEKIVLVRGDAVDNNQAIGEARRLISVENVAGIFGSFSSGRAVAASQVSELAGVPYFELGAVADEITDRGLENVYRANPYARDFAQMIVEMLQKKIAPKLGRDSKDLKIAVIYEDSSYGTSVAKHEETFLKEAGLNMVLSQSYPGNTVDMSSLVLDLKSAGADVVLQTSYQSDSVLFLQQANEGGYKPSAIVGAGGGYSLQPTADAVGHDVIEAAYDVDFTQFAVNTSFTPGLEEFVEAYKKKYGETPRSGYSLTNYVGAKVILEALNKVKGFDAAAVKQALSAVDIEAGKTAMGYGFKFDQNNQNERASMMGMQWQDGKLVTVYPDAAAISEIRLPQ.

Positions 1–22 are cleaved as a signal peptide; it reads MEKHLIALSVAALQAGAAPASA.

The protein belongs to the leucine-binding protein family.

Component of an amino-acid transport system. The polypeptide is Leu/Ile/Val-binding protein homolog 7 (Brucella abortus (strain 2308)).